The primary structure comprises 245 residues: Tryptophan synthase alpha chain (245 aa).

Residues glutamate 35 and aspartate 46 each act as proton acceptor in the active site.

It belongs to the TrpA family. As to quaternary structure, tetramer of two alpha and two beta chains.

The catalysed reaction is (1S,2R)-1-C-(indol-3-yl)glycerol 3-phosphate + L-serine = D-glyceraldehyde 3-phosphate + L-tryptophan + H2O. It participates in amino-acid biosynthesis; L-tryptophan biosynthesis; L-tryptophan from chorismate: step 5/5. Its function is as follows. The alpha subunit is responsible for the aldol cleavage of indoleglycerol phosphate to indole and glyceraldehyde 3-phosphate. The protein is Tryptophan synthase alpha chain of Sulfurisphaera tokodaii (strain DSM 16993 / JCM 10545 / NBRC 100140 / 7) (Sulfolobus tokodaii).